The following is a 128-amino-acid chain: Small ribosomal subunit protein uS11 (128 aa).

The protein belongs to the universal ribosomal protein uS11 family. As to quaternary structure, part of the 30S ribosomal subunit. Interacts with proteins S7 and S18. Binds to IF-3.

Its function is as follows. Located on the platform of the 30S subunit, it bridges several disparate RNA helices of the 16S rRNA. Forms part of the Shine-Dalgarno cleft in the 70S ribosome. The protein is Small ribosomal subunit protein uS11 of Wolbachia sp. subsp. Drosophila simulans (strain wRi).